The primary structure comprises 359 residues: Peptide chain release factor 1 (359 aa).

Gln-236 carries the post-translational modification N5-methylglutamine.

This sequence belongs to the prokaryotic/mitochondrial release factor family. Post-translationally, methylated by PrmC. Methylation increases the termination efficiency of RF1.

The protein localises to the cytoplasm. Peptide chain release factor 1 directs the termination of translation in response to the peptide chain termination codons UAG and UAA. The protein is Peptide chain release factor 1 of Streptococcus pneumoniae serotype 4 (strain ATCC BAA-334 / TIGR4).